The following is a 525-amino-acid chain: Cytochrome P450 703A2 (525 aa).

Residues 3-23 traverse the membrane as a helical segment; it reads PFLLSIILCSWIFVVVSWKKL. Cys-455 serves as a coordination point for heme.

Belongs to the cytochrome P450 family. Heme is required as a cofactor.

It is found in the membrane. It carries out the reaction dodecanoate + reduced [NADPH--hemoprotein reductase] + O2 = 7-hydroxydodecanoate + oxidized [NADPH--hemoprotein reductase] + H2O + H(+). Functionally, involved in pollen exine and anther epicuticular layer development. Catalyzes the in-chain hydroxylation of lauric acid (C12:0) preferentially on position 7, generating 7-hydroxylated lauric acid. Does not possess activity with other fatty acids (C14:0, C16:0, C16:1, and C18:0). Participates in a conserved pathway of in-chain hydroxylation of lauric acid required for anther cuticle and pollen exine formation. Directly regulated by TDR, a known regulator of tapetum programmed cell death (PCD) and pollen exine formation. The polypeptide is Cytochrome P450 703A2 (Oryza sativa subsp. japonica (Rice)).